The primary structure comprises 135 residues: Small ribosomal subunit protein uS12 (135 aa).

The disordered stretch occupies residues 1–20 (MPTINQLVRKGRHSKVTKSK). The segment covering 9–18 (RKGRHSKVTK) has biased composition (basic residues). Asp102 bears the 3-methylthioaspartic acid mark.

Belongs to the universal ribosomal protein uS12 family. Part of the 30S ribosomal subunit. Contacts proteins S8 and S17. May interact with IF1 in the 30S initiation complex.

With S4 and S5 plays an important role in translational accuracy. Its function is as follows. Interacts with and stabilizes bases of the 16S rRNA that are involved in tRNA selection in the A site and with the mRNA backbone. Located at the interface of the 30S and 50S subunits, it traverses the body of the 30S subunit contacting proteins on the other side and probably holding the rRNA structure together. The combined cluster of proteins S8, S12 and S17 appears to hold together the shoulder and platform of the 30S subunit. The polypeptide is Small ribosomal subunit protein uS12 (Lactobacillus helveticus (strain DPC 4571)).